A 196-amino-acid polypeptide reads, in one-letter code: Protein GrpE (196 aa).

Residues 1–24 (MAENERTTENFQPQDPSYAEAATT) are disordered.

It belongs to the GrpE family. In terms of assembly, homodimer.

Its subcellular location is the cytoplasm. Its function is as follows. Participates actively in the response to hyperosmotic and heat shock by preventing the aggregation of stress-denatured proteins, in association with DnaK and GrpE. It is the nucleotide exchange factor for DnaK and may function as a thermosensor. Unfolded proteins bind initially to DnaJ; upon interaction with the DnaJ-bound protein, DnaK hydrolyzes its bound ATP, resulting in the formation of a stable complex. GrpE releases ADP from DnaK; ATP binding to DnaK triggers the release of the substrate protein, thus completing the reaction cycle. Several rounds of ATP-dependent interactions between DnaJ, DnaK and GrpE are required for fully efficient folding. The polypeptide is Protein GrpE (Gloeobacter violaceus (strain ATCC 29082 / PCC 7421)).